Here is a 448-residue protein sequence, read N- to C-terminus: 3-phosphoshikimate 1-carboxyvinyltransferase (448 aa).

3-phosphoshikimate-binding residues include Lys38, Ser39, and Arg43. Lys38 is a phosphoenolpyruvate binding site. Residues Gly111 and Arg140 each coordinate phosphoenolpyruvate. The 3-phosphoshikimate site is built by Ser185, Gln187, Asp335, and Lys362. Gln187 serves as a coordination point for phosphoenolpyruvate. Residue Asp335 is the Proton acceptor of the active site. Phosphoenolpyruvate contacts are provided by Arg366 and Arg408.

This sequence belongs to the EPSP synthase family. As to quaternary structure, monomer.

Its subcellular location is the cytoplasm. It carries out the reaction 3-phosphoshikimate + phosphoenolpyruvate = 5-O-(1-carboxyvinyl)-3-phosphoshikimate + phosphate. The protein operates within metabolic intermediate biosynthesis; chorismate biosynthesis; chorismate from D-erythrose 4-phosphate and phosphoenolpyruvate: step 6/7. Catalyzes the transfer of the enolpyruvyl moiety of phosphoenolpyruvate (PEP) to the 5-hydroxyl of shikimate-3-phosphate (S3P) to produce enolpyruvyl shikimate-3-phosphate and inorganic phosphate. This chain is 3-phosphoshikimate 1-carboxyvinyltransferase, found in Gloeothece citriformis (strain PCC 7424) (Cyanothece sp. (strain PCC 7424)).